Reading from the N-terminus, the 137-residue chain is Small ribosomal subunit protein uS12 (137 aa).

Residues 1–26 (MPTINQLVRKPRQSKIKKSTSPALNK) form a disordered region. A compositionally biased stretch (basic residues) spans 9 to 18 (RKPRQSKIKK).

It belongs to the universal ribosomal protein uS12 family. As to quaternary structure, part of the 30S ribosomal subunit. Contacts proteins S8 and S17. May interact with IF1 in the 30S initiation complex.

With S4 and S5 plays an important role in translational accuracy. Its function is as follows. Interacts with and stabilizes bases of the 16S rRNA that are involved in tRNA selection in the A site and with the mRNA backbone. Located at the interface of the 30S and 50S subunits, it traverses the body of the 30S subunit contacting proteins on the other side and probably holding the rRNA structure together. The combined cluster of proteins S8, S12 and S17 appears to hold together the shoulder and platform of the 30S subunit. The chain is Small ribosomal subunit protein uS12 from Listeria innocua serovar 6a (strain ATCC BAA-680 / CLIP 11262).